A 346-amino-acid chain; its full sequence is L-threonine dehydratase catabolic TdcB (346 aa).

59–60 (FT) provides a ligand contact to AMP. Lys-64 carries the N6-(pyridoxal phosphate)lysine modification. Residues Gln-94, 125-126 (GY), and Asn-321 contribute to the AMP site.

This sequence belongs to the serine/threonine dehydratase family. As to quaternary structure, in the native structure, TdcB is in a dimeric form, whereas in the TdcB-AMP complex, it exists in a tetrameric form (dimer of dimers). Requires pyridoxal 5'-phosphate as cofactor.

The catalysed reaction is L-threonine = 2-oxobutanoate + NH4(+). Its pathway is amino-acid degradation; L-threonine degradation via propanoate pathway; propanoate from L-threonine: step 1/4. With respect to regulation, each protein molecule can bind up to four molecules of AMP, which act as an allosteric activator to the enzyme. In terms of biological role, catalyzes the anaerobic formation of alpha-ketobutyrate and ammonia from threonine in a two-step reaction. The first step involved a dehydration of threonine and a production of enamine intermediates (aminocrotonate), which tautomerizes to its imine form (iminobutyrate). Both intermediates are unstable and short-lived. The second step is the nonenzymatic hydrolysis of the enamine/imine intermediates to form 2-ketobutyrate and free ammonia. In the low water environment of the cell, the second step is accelerated by RidA. In Staphylococcus aureus (strain USA300), this protein is L-threonine dehydratase catabolic TdcB (tdcB).